Reading from the N-terminus, the 1671-residue chain is Fatty acid synthase alpha subunit aflA (1671 aa).

Positions 40–60 (ITEEAPTEQPPLSTPPSLPQT) are disordered. Positions 47–58 (EQPPLSTPPSLP) are enriched in pro residues. The Carrier domain occupies 75 to 153 (DVALSRVQIV…DANPTVQLGK (79 aa)). Position 113 is an O-(pantetheine 4'-phosphoryl)serine (serine 113). The interval 492-729 (GKTFLVTGAG…AMLLTPDFVA (238 aa)) is ketoreductase (KR) domain. In terms of domain architecture, Ketosynthase family 3 (KS3) spans 926–1428 (MEVLQEVAVE…QKGGQVVGVA (503 aa)). The For beta-ketoacyl synthase activity role is filled by cysteine 1113. Over residues 1244–1270 (SMISVTSRPSSRSSTSSEVSDKSSLTS) the composition is skewed to low complexity. The tract at residues 1244 to 1288 (SMISVTSRPSSRSSTSSEVSDKSSLTSITSISNPAPRAQRARSTT) is disordered. Active-site for beta-ketoacyl synthase activity residues include histidine 1313 and histidine 1354. The disordered stretch occupies residues 1497–1521 (PSTGQYRFRSDATPALDDDALPPPG). Aspartate 1552 contacts Mg(2+). Acetyl-CoA is bound by residues 1552–1554 (DLV), 1598–1608 (EAVFKCLQTHS), 1622–1625 (HGGN), and 1652–1654 (ISY). Mg(2+) is bound at residue serine 1653.

Belongs to the thiolase-like superfamily. Fungal fatty acid synthetase subunit alpha family. [Alpha(6)beta(6)] hexamers of two multifunctional subunits (alpha and beta). In terms of processing, 4'-phosphopantetheine is transferred from CoA to a specific serine of the acyl carrier domain by the C-terminal PPT domain. This modification is essential for activity because fatty acids are bound in thioester linkage to the sulfhydryl of the prosthetic group.

The catalysed reaction is acetyl-CoA + n malonyl-CoA + 2n NADPH + 4n H(+) = a long-chain-acyl-CoA + n CoA + n CO2 + 2n NADP(+).. It catalyses the reaction a fatty acyl-[ACP] + malonyl-[ACP] + H(+) = a 3-oxoacyl-[ACP] + holo-[ACP] + CO2. The enzyme catalyses a (3R)-hydroxyacyl-[ACP] + NADP(+) = a 3-oxoacyl-[ACP] + NADPH + H(+). It functions in the pathway mycotoxin biosynthesis; aflatoxin biosynthesis. Functionally, fatty acid synthase alpha subunit; part of the gene cluster that mediates the biosynthesis of aflatoxins, a group of polyketide-derived furanocoumarins, and part of the most toxic and carcinogenic compounds among the known mycotoxins. The four major aflatoxins produced by A.parasiticus are aflatoxin B1 (AFB1), aflatoxin B2 (AFB2), aflatoxin G1 (AFG1) and aflatoxin G2 (AFG2). Within the aflatoxin pathway, the fungal fatty acid synthase aflA/aflB provides the hexanoyl starter unit to the acyl-carrier protein (ACP) domain of the norsolorinic acid synthase to allow the first step of the pathway. The biosynthesis of aflatoxins begins with the norsolorinic acid synthase aflC that combines a hexanoyl starter unit produced by the fatty acid synthase aflA/aflB and 7 malonyl-CoA extender units to synthesize the precursor NOR. The second step is the conversion of NOR to averantin (AVN) and requires the norsolorinic acid ketoreductase aflD, which catalyzes the dehydration of norsolorinic acid to form (1'S)-averantin. The norsolorinic acid reductases aflE and aflF may also play a role in the conversion of NOR to AVN. The cytochrome P450 monooxygenase aflG then catalyzes the hydroxylation of AVN to 5'hydroxyaverantin (HAVN). The next step is performed by the 5'-hydroxyaverantin dehydrogenase aflH that transforms HAVN to 5'-oxoaverantin (OAVN) which is further converted to averufin (AVF) by aflK that plays a dual role in the pathway, as a 5'-oxoaverantin cyclase that mediates conversion of 5'-oxoaverantin, as well as a versicolorin B synthase in a later step in the pathway. The averufin oxidase aflI catalyzes the conversion of AVF to versiconal hemiacetal acetate (VHA). VHA is then the substrate for the versiconal hemiacetal acetate esterase aflJ to yield versiconal (VAL). Versicolorin B synthase aflK then converts VAL to versicolorin B (VERB) by closing the bisfuran ring of aflatoxin which is required for DNA-binding, thus giving to aflatoxin its activity as a mutagen. Then, the activity of the versicolorin B desaturase aflL leads to versicolorin A (VERA). A branch point starts from VERB since it can also be converted to dihydrodemethylsterigmatocystin (DMDHST), probably also by aflL, VERA being a precursor for aflatoxins B1 and G1, and DMDHST for aflatoxins B2 and G2. Next, the versicolorin reductase aflM and the cytochrome P450 monooxygenase aflN are involved in conversion of VERA to demethylsterigmatocystin (DMST). AflX and aflY seem also involved in this step, through probable aflX-mediated epoxide ring-opening step following versicolorin A oxidation and aflY-mediated Baeyer-Villiger oxidation required for the formation of the xanthone ring. The methyltransferase aflO then leads to the modification of DMST to sterigmatocystin (ST), and of DMDHST to dihydrosterigmatocystin (DHST). Both ST and DHST are then substrates of the O-methyltransferase aflP to yield O-methylsterigmatocystin (OMST) and dihydro-O-methylsterigmatocystin (DHOMST), respectively. Finally OMST is converted to aflatoxins B1 and G1, and DHOMST to aflatoxins B2 and G2, via the action of several enzymes including O-methylsterigmatocystin oxidoreductase aflQ, the cytochrome P450 monooxygenase aflU, but also the NADH-dependent flavin oxidoreductase nadA which is specifically required for the synthesis of AFG1. The protein is Fatty acid synthase alpha subunit aflA of Aspergillus parasiticus (strain ATCC 56775 / NRRL 5862 / SRRC 143 / SU-1).